The primary structure comprises 97 residues: MICOS complex subunit MIC12 (97 aa).

A helical membrane pass occupies residues 7–24; it reads LTSITAVSSTLAASYYFY.

The protein belongs to the MICOS complex subunit Mic12 family. In terms of assembly, component of the mitochondrial contact site and cristae organizing system (MICOS) complex.

Its subcellular location is the mitochondrion inner membrane. In terms of biological role, component of the MICOS complex, a large protein complex of the mitochondrial inner membrane that plays crucial roles in the maintenance of crista junctions, inner membrane architecture, and formation of contact sites to the outer membrane. The protein is MICOS complex subunit MIC12 (AIM5) of Zygosaccharomyces rouxii (strain ATCC 2623 / CBS 732 / NBRC 1130 / NCYC 568 / NRRL Y-229).